The following is a 142-amino-acid chain: NTF2-related export protein 2 (142 aa).

Positions 17–136 (AAEEFVNIYY…WKIASDCFRF (120 aa)) constitute an NTF2 domain.

Associates with NXF1, NXF2, NXF3 and NXF5.

It is found in the nucleus. The protein localises to the cytoplasm. Functionally, regulator of protein export for NES-containing proteins. Also plays a role in mRNA nuclear export. This Bos taurus (Bovine) protein is NTF2-related export protein 2 (NXT2).